A 174-amino-acid chain; its full sequence is ATP-dependent protease subunit HslV (174 aa).

Threonine 2 is an active-site residue. 3 residues coordinate Na(+): glycine 157, cysteine 160, and threonine 163.

This sequence belongs to the peptidase T1B family. HslV subfamily. In terms of assembly, a double ring-shaped homohexamer of HslV is capped on each side by a ring-shaped HslU homohexamer. The assembly of the HslU/HslV complex is dependent on binding of ATP.

Its subcellular location is the cytoplasm. It carries out the reaction ATP-dependent cleavage of peptide bonds with broad specificity.. Allosterically activated by HslU binding. Functionally, protease subunit of a proteasome-like degradation complex believed to be a general protein degrading machinery. This Shewanella woodyi (strain ATCC 51908 / MS32) protein is ATP-dependent protease subunit HslV.